The primary structure comprises 389 residues: Large ribosomal subunit protein uL3 (389 aa).

The protein belongs to the universal ribosomal protein uL3 family. As to quaternary structure, component of the large ribosomal subunit. Mature ribosomes consist of a small (40S) and a large (60S) subunit. The 40S subunit contains about 32 different proteins and 1 molecule of RNA (18S). The 60S subunit contains 45 different proteins and 3 molecules of RNA (25S, 5.8S and 5S).

Its subcellular location is the cytoplasm. In terms of biological role, component of the ribosome, a large ribonucleoprotein complex responsible for the synthesis of proteins in the cell. The small ribosomal subunit (SSU) binds messenger RNAs (mRNAs) and translates the encoded message by selecting cognate aminoacyl-transfer RNA (tRNA) molecules. The large subunit (LSU) contains the ribosomal catalytic site termed the peptidyl transferase center (PTC), which catalyzes the formation of peptide bonds, thereby polymerizing the amino acids delivered by tRNAs into a polypeptide chain. The nascent polypeptides leave the ribosome through a tunnel in the LSU and interact with protein factors that function in enzymatic processing, targeting, and the membrane insertion of nascent chains at the exit of the ribosomal tunnel. RPL3 plays a role in coordinating processes of accommodating the aminoacyl-tRNA in the PTC. The chain is Large ribosomal subunit protein uL3 from Candida albicans (strain SC5314 / ATCC MYA-2876) (Yeast).